The sequence spans 409 residues: Tyrosine--tRNA ligase (409 aa).

The 'HIGH' region signature appears at 54–63 (PTAPDIHLGH). The short motif at 238-242 (KMSKS) is the 'KMSKS' region element. Residue K241 participates in ATP binding. Residues 347–407 (QGILRILREA…GKRKFARVKL (61 aa)) form the S4 RNA-binding domain.

This sequence belongs to the class-I aminoacyl-tRNA synthetase family. TyrS type 2 subfamily. As to quaternary structure, homodimer.

Its subcellular location is the cytoplasm. The enzyme catalyses tRNA(Tyr) + L-tyrosine + ATP = L-tyrosyl-tRNA(Tyr) + AMP + diphosphate + H(+). In terms of biological role, catalyzes the attachment of tyrosine to tRNA(Tyr) in a two-step reaction: tyrosine is first activated by ATP to form Tyr-AMP and then transferred to the acceptor end of tRNA(Tyr). The sequence is that of Tyrosine--tRNA ligase from Bordetella pertussis (strain Tohama I / ATCC BAA-589 / NCTC 13251).